We begin with the raw amino-acid sequence, 241 residues long: Ribonuclease PH (241 aa).

Phosphate is bound by residues Arg-87 and 125–127 (GTR).

Belongs to the RNase PH family. Homohexameric ring arranged as a trimer of dimers.

It carries out the reaction tRNA(n+1) + phosphate = tRNA(n) + a ribonucleoside 5'-diphosphate. Phosphorolytic 3'-5' exoribonuclease that plays an important role in tRNA 3'-end maturation. Removes nucleotide residues following the 3'-CCA terminus of tRNAs; can also add nucleotides to the ends of RNA molecules by using nucleoside diphosphates as substrates, but this may not be physiologically important. Probably plays a role in initiation of 16S rRNA degradation (leading to ribosome degradation) during starvation. In Salinispora tropica (strain ATCC BAA-916 / DSM 44818 / JCM 13857 / NBRC 105044 / CNB-440), this protein is Ribonuclease PH.